The following is a 250-amino-acid chain: DNA repair protein RecO (250 aa).

This sequence belongs to the RecO family.

Involved in DNA repair and RecF pathway recombination. In Granulibacter bethesdensis (strain ATCC BAA-1260 / CGDNIH1), this protein is DNA repair protein RecO.